Consider the following 1128-residue polypeptide: Phytochrome A (1128 aa).

The span at 1-21 shows a compositional bias: low complexity; the sequence is MSSSRPTQCSSSSSRTRQSSR. Residues 1-24 form a disordered region; sequence MSSSRPTQCSSSSSRTRQSSRARI. In terms of domain architecture, GAF spans 219–404; it reads SMEVLCNTVV…VFAVHVNKEF (186 aa). Residue Cys-324 coordinates phytochromobilin. 2 consecutive PAS domains span residues 620–690 and 750–834; these read VTSE…LQGK and VEGD…LAGD. Positions 904 to 1124 constitute a Histidine kinase domain; that stretch reads YMRHAINNPL…TFILSVELAS (221 aa).

It belongs to the phytochrome family. In terms of assembly, homodimer. In terms of processing, contains one covalently linked phytochromobilin chromophore.

Regulatory photoreceptor which exists in two forms that are reversibly interconvertible by light: the Pr form that absorbs maximally in the red region of the spectrum and the Pfr form that absorbs maximally in the far-red region. Photoconversion of Pr to Pfr induces an array of morphogenic responses, whereas reconversion of Pfr to Pr cancels the induction of those responses. Pfr controls the expression of a number of nuclear genes including those encoding the small subunit of ribulose-bisphosphate carboxylase, chlorophyll A/B binding protein, protochlorophyllide reductase, rRNA, etc. It also controls the expression of its own gene(s) in a negative feedback fashion. The protein is Phytochrome A (PHYA) of Oryza sativa subsp. indica (Rice).